A 173-amino-acid polypeptide reads, in one-letter code: VQ motif-containing protein 31 (173 aa).

A VQ motif is present at residues 27-36 (FREIVQRLTG). Thr46 carries the post-translational modification Phosphothreonine. 2 disordered regions span residues 76–105 (EIVK…TSPV) and 143–173 (LHPS…SGKP). The segment covering 86–105 (PTGTTPSSKSGNTNLLTSPV) has biased composition (polar residues). Phosphoserine occurs at positions 92, 103, 146, and 149. Residues 154–165 (TEPELLTLFPLT) are compositionally biased toward low complexity. Thr165 bears the Phosphothreonine mark. Ser166 and Ser170 each carry phosphoserine.

Post-translationally, phosphorylated on serine and threonine residues by MPK6.

The protein resides in the nucleus. In terms of biological role, may modulate WRKY transcription factor activities. The protein is VQ motif-containing protein 31 of Arabidopsis thaliana (Mouse-ear cress).